The following is a 21-amino-acid chain: Cupiennin-6c (21 aa).

S21 is modified (serine amide).

Expressed by the venom gland.

The protein resides in the secreted. This is Cupiennin-6c from Cupiennius salei (American wandering spider).